The sequence spans 473 residues: ATP synthase subunit beta (473 aa).

158-165 (GGAGVGKT) is a binding site for ATP.

The protein belongs to the ATPase alpha/beta chains family. In terms of assembly, F-type ATPases have 2 components, CF(1) - the catalytic core - and CF(0) - the membrane proton channel. CF(1) has five subunits: alpha(3), beta(3), gamma(1), delta(1), epsilon(1). CF(0) has three main subunits: a(1), b(2) and c(9-12). The alpha and beta chains form an alternating ring which encloses part of the gamma chain. CF(1) is attached to CF(0) by a central stalk formed by the gamma and epsilon chains, while a peripheral stalk is formed by the delta and b chains.

It localises to the cell membrane. The enzyme catalyses ATP + H2O + 4 H(+)(in) = ADP + phosphate + 5 H(+)(out). Its function is as follows. Produces ATP from ADP in the presence of a proton gradient across the membrane. The catalytic sites are hosted primarily by the beta subunits. The chain is ATP synthase subunit beta from Geobacillus thermoleovorans (Bacillus thermoleovorans).